Here is an 84-residue protein sequence, read N- to C-terminus: Large ribosomal subunit protein bL27 (84 aa).

The segment at 1–21 is disordered; sequence MAHKKAGGSTRNGRDSNPKYL.

This sequence belongs to the bacterial ribosomal protein bL27 family.

This Francisella tularensis subsp. holarctica (strain FTNF002-00 / FTA) protein is Large ribosomal subunit protein bL27.